Here is a 116-residue protein sequence, read N- to C-terminus: Aspartate 1-decarboxylase (116 aa).

The active-site Schiff-base intermediate with substrate; via pyruvic acid is Ser25. The residue at position 25 (Ser25) is a Pyruvic acid (Ser). Substrate is bound at residue Thr57. Catalysis depends on Tyr58, which acts as the Proton donor. 73–75 (GAA) provides a ligand contact to substrate.

Belongs to the PanD family. In terms of assembly, heterooctamer of four alpha and four beta subunits. Pyruvate is required as a cofactor. Post-translationally, is synthesized initially as an inactive proenzyme, which is activated by self-cleavage at a specific serine bond to produce a beta-subunit with a hydroxyl group at its C-terminus and an alpha-subunit with a pyruvoyl group at its N-terminus.

It is found in the cytoplasm. The enzyme catalyses L-aspartate + H(+) = beta-alanine + CO2. It participates in cofactor biosynthesis; (R)-pantothenate biosynthesis; beta-alanine from L-aspartate: step 1/1. Its function is as follows. Catalyzes the pyruvoyl-dependent decarboxylation of aspartate to produce beta-alanine. The protein is Aspartate 1-decarboxylase of Phocaeicola vulgatus (strain ATCC 8482 / DSM 1447 / JCM 5826 / CCUG 4940 / NBRC 14291 / NCTC 11154) (Bacteroides vulgatus).